A 354-amino-acid polypeptide reads, in one-letter code: UDP-N-acetylglucosamine--N-acetylmuramyl-(pentapeptide) pyrophosphoryl-undecaprenol N-acetylglucosamine transferase (354 aa).

UDP-N-acetyl-alpha-D-glucosamine contacts are provided by residues 11-13, arginine 164, serine 194, and glutamine 289; that span reads TAG.

It belongs to the glycosyltransferase 28 family. MurG subfamily.

Its subcellular location is the cell membrane. It carries out the reaction di-trans,octa-cis-undecaprenyl diphospho-N-acetyl-alpha-D-muramoyl-L-alanyl-D-glutamyl-meso-2,6-diaminopimeloyl-D-alanyl-D-alanine + UDP-N-acetyl-alpha-D-glucosamine = di-trans,octa-cis-undecaprenyl diphospho-[N-acetyl-alpha-D-glucosaminyl-(1-&gt;4)]-N-acetyl-alpha-D-muramoyl-L-alanyl-D-glutamyl-meso-2,6-diaminopimeloyl-D-alanyl-D-alanine + UDP + H(+). Its pathway is cell wall biogenesis; peptidoglycan biosynthesis. In terms of biological role, cell wall formation. Catalyzes the transfer of a GlcNAc subunit on undecaprenyl-pyrophosphoryl-MurNAc-pentapeptide (lipid intermediate I) to form undecaprenyl-pyrophosphoryl-MurNAc-(pentapeptide)GlcNAc (lipid intermediate II). The sequence is that of UDP-N-acetylglucosamine--N-acetylmuramyl-(pentapeptide) pyrophosphoryl-undecaprenol N-acetylglucosamine transferase from Clostridium botulinum (strain ATCC 19397 / Type A).